The chain runs to 247 residues: Putative methyltransferase YqeM (247 aa).

It belongs to the methyltransferase superfamily.

In terms of biological role, may be a S-adenosyl-L-methionine (SAM)-dependent methyltransferase. The polypeptide is Putative methyltransferase YqeM (yqeM) (Bacillus subtilis (strain 168)).